The following is a 332-amino-acid chain: Holliday junction branch migration complex subunit RuvB (332 aa).

Positions 1 to 181 are large ATPase domain (RuvB-L); sequence MARILDNDVM…FGITGHMEYY (181 aa). ATP-binding positions include Leu-20, Arg-21, Gly-62, Lys-65, Thr-66, Thr-67, 128-130, Arg-171, Tyr-181, and Arg-218; that span reads EDF. Residue Thr-66 coordinates Mg(2+). A small ATPAse domain (RuvB-S) region spans residues 182–252; the sequence is QEKDLTEIVE…ITDRALTMLD (71 aa). The interval 255-332 is head domain (RuvB-H); that stretch reads REGLDYIDQK…RHLGYPYQNT (78 aa). Positions 291, 310, 312, and 315 each coordinate DNA.

This sequence belongs to the RuvB family. Homohexamer. Forms an RuvA(8)-RuvB(12)-Holliday junction (HJ) complex. HJ DNA is sandwiched between 2 RuvA tetramers; dsDNA enters through RuvA and exits via RuvB. An RuvB hexamer assembles on each DNA strand where it exits the tetramer. Each RuvB hexamer is contacted by two RuvA subunits (via domain III) on 2 adjacent RuvB subunits; this complex drives branch migration. In the full resolvosome a probable DNA-RuvA(4)-RuvB(12)-RuvC(2) complex forms which resolves the HJ.

The protein resides in the cytoplasm. The catalysed reaction is ATP + H2O = ADP + phosphate + H(+). Functionally, the RuvA-RuvB-RuvC complex processes Holliday junction (HJ) DNA during genetic recombination and DNA repair, while the RuvA-RuvB complex plays an important role in the rescue of blocked DNA replication forks via replication fork reversal (RFR). RuvA specifically binds to HJ cruciform DNA, conferring on it an open structure. The RuvB hexamer acts as an ATP-dependent pump, pulling dsDNA into and through the RuvAB complex. RuvB forms 2 homohexamers on either side of HJ DNA bound by 1 or 2 RuvA tetramers; 4 subunits per hexamer contact DNA at a time. Coordinated motions by a converter formed by DNA-disengaged RuvB subunits stimulates ATP hydrolysis and nucleotide exchange. Immobilization of the converter enables RuvB to convert the ATP-contained energy into a lever motion, pulling 2 nucleotides of DNA out of the RuvA tetramer per ATP hydrolyzed, thus driving DNA branch migration. The RuvB motors rotate together with the DNA substrate, which together with the progressing nucleotide cycle form the mechanistic basis for DNA recombination by continuous HJ branch migration. Branch migration allows RuvC to scan DNA until it finds its consensus sequence, where it cleaves and resolves cruciform DNA. The polypeptide is Holliday junction branch migration complex subunit RuvB (Streptococcus pyogenes serotype M3 (strain ATCC BAA-595 / MGAS315)).